Reading from the N-terminus, the 540-residue chain is Probable G-protein coupled receptor 75 (540 aa).

Over 1–46 (MNTSAPLQNVPNATLLNMPPLHGGNSTSLQEGLRDFIHTATLVTCT) the chain is Extracellular. N-linked (GlcNAc...) asparagine glycans are attached at residues asparagine 2 and asparagine 25. Residues 47-67 (FLLAIIFCLGSYGNFIVFLSF) form a helical membrane-spanning segment. Topologically, residues 68–86 (FDPSFRKFRTNFDFMILNL) are cytoplasmic. The helical transmembrane segment at 87–107 (SFCDLFICGVTAPMFTFVLFF) threads the bilayer. Residues 108 to 120 (SSASSIPDSFCFT) are Extracellular-facing. The chain crosses the membrane as a helical span at residues 121 to 141 (FHLTSSGFVIMSLKMVAVIAL). The Cytoplasmic segment spans residues 142 to 160 (HRLRMVMGKQPNCTASFSC). The chain crosses the membrane as a helical span at residues 161 to 181 (ILLLTLLLWATSFTLATLATL). The Extracellular segment spans residues 182-205 (RTNKSHLCLPMSSLMDGEGKAILS). Asparagine 184 is a glycosylation site (N-linked (GlcNAc...) asparagine). The chain crosses the membrane as a helical span at residues 206 to 226 (LYVVDFTFCVAVVSVSYIMIA). At 227 to 318 (QTLRKNAQVK…INFSTAKDSK (92 aa)) the chain is on the cytoplasmic side. A helical membrane pass occupies residues 319 to 339 (AVVTCVVIVLSVLVCCLPLGI). Topologically, residues 340 to 350 (SLVQMVLSDNG) are extracellular. Residues 351-371 (SFILYQFELFGFTLIFFKSGL) traverse the membrane as a helical segment. Over 372–540 (NPFIYSRNSA…SAKQIPIPSV (169 aa)) the chain is Cytoplasmic. The interval 443 to 475 (DQACGPSHSKESAASPKVSAGHQPCGQSSSTPI) is disordered.

It belongs to the G-protein coupled receptor 1 family. In terms of tissue distribution, highly expressed in brain and heart. Also detected in skeletal muscle, liver and kidney. Also expressed by islet cells (at protein level).

It is found in the cell membrane. Its function is as follows. G protein-coupled receptor that is activated by the chemokine CCL5/RANTES. Probably coupled to heterotrimeric Gq proteins, it stimulates inositol trisphosphate production and calcium mobilization upon activation. Together with CCL5/RANTES, may play a role in neuron survival through activation of a downstream signaling pathway involving the PI3, Akt and MAP kinases. CCL5/RANTES may also regulate insulin secretion by pancreatic islet cells through activation of this receptor. The polypeptide is Probable G-protein coupled receptor 75 (Gpr75) (Mus musculus (Mouse)).